We begin with the raw amino-acid sequence, 129 residues long: Putative membrane protein insertion efficiency factor (129 aa).

It belongs to the UPF0161 family.

The protein localises to the cell inner membrane. In terms of biological role, could be involved in insertion of integral membrane proteins into the membrane. The sequence is that of Putative membrane protein insertion efficiency factor from Rhodopseudomonas palustris (strain TIE-1).